A 590-amino-acid chain; its full sequence is Transcription factor GTE7 (590 aa).

Residues 125–160 (LNNFTGEKNDLGPKKKKQKKNVSGLKRSNQFGPSDP) are disordered. The region spanning 164–270 (KLLAGMLNTC…DHFDGMFNPA (107 aa)) is the Bromo domain. 2 disordered regions span residues 282-400 (TGSS…KDPN) and 476-590 (RQGF…EAQC). Positions 288-298 (PEPDFKPDFKQ) are enriched in basic and acidic residues. Pro residues predominate over residues 347 to 369 (PSPPPPPPVIQPELPQPQPPPPQ). One can recognise an NET domain in the interval 394 to 475 (PKAKDPNKRL…NYKKMASKIK (82 aa)). Residues 498–508 (SAEKRTRRGDA) are compositionally biased toward basic and acidic residues. Residues 509-521 (GEEDVDIGEDIPI) show a composition bias toward acidic residues. Low complexity predominate over residues 537–562 (AAAASSGSSSSGSSSSSGGSSSSSDS).

It localises to the nucleus. The chain is Transcription factor GTE7 (GTE7) from Arabidopsis thaliana (Mouse-ear cress).